The sequence spans 307 residues: Small ribosomal subunit protein bS1 (307 aa).

3 consecutive S1 motif domains span residues 32 to 101 (GDTV…LSIR), 119 to 183 (DATV…LSHR), and 197 to 265 (GEVV…LSTK).

Belongs to the bacterial ribosomal protein bS1 family.

Functionally, binds mRNA. The chain is Small ribosomal subunit protein bS1 (rpsA) from Synechococcus sp. (strain ATCC 27144 / PCC 6301 / SAUG 1402/1) (Anacystis nidulans).